The sequence spans 511 residues: BAR/IMD domain-containing adapter protein 2-like 1 (511 aa).

The 249-residue stretch at 1–249 folds into the IMD domain; that stretch reads MSRGPEEVNR…MNMIEEIKTP (249 aa). Positions 115-154 form a coiled coil; the sequence is MNATLKRYQTEHKNKLESLEKSQAELKKIRRKSQGSRNAL. Phosphothreonine is present on residues Thr248 and Thr257. Residues Ser261 and Ser281 each carry the phosphoserine modification. The disordered stretch occupies residues 302-328; the sequence is NNPATAAPNSQRVNNSTGTSEDPSLQR. Over residues 303–328 the composition is skewed to polar residues; the sequence is NPATAAPNSQRVNNSTGTSEDPSLQR. Phosphoserine is present on residues Ser331 and Ser354. The region spanning 339-402 is the SH3 domain; sequence MKKQKVKTIF…PSSYTKLLEE (64 aa). Thr412 carries the phosphothreonine modification. 3 positions are modified to phosphoserine: Ser414, Ser420, and Ser422. Residues 451–511 form a disordered region; that stretch reads RRADSARTTS…TNDRSAPIIR (61 aa). The segment at 483–511 is binds F-actin; sequence PPFLSGENPFATVKLRPTVTNDRSAPIIR.

In terms of assembly, interacts with RAC1. Binds to F-actin. Interacts with FASLG. Interacts (via SH3 domain) with E.coli effector protein EspF(U) (via PXXP motifs). Identified in a complex containing at least WASL, BAIAP2L1 and E.coli EspF(U). Interacts with E.coli intimin receptor Tir. Post-translationally, phosphorylated on tyrosine in response to insulin.

The protein localises to the cytoplasm. The protein resides in the cytoskeleton. May function as adapter protein. Involved in the formation of clusters of actin bundles. Plays a role in the reorganization of the actin cytoskeleton in response to bacterial infection. The sequence is that of BAR/IMD domain-containing adapter protein 2-like 1 (BAIAP2L1) from Homo sapiens (Human).